Reading from the N-terminus, the 282-residue chain is Deoxyribonuclease-1 (282 aa).

The N-terminal stretch at 1-22 (MRGTRLMGLLLALAGLLQLGLS) is a signal peptide. N-linked (GlcNAc...) asparagine glycosylation is present at N40. Residue E100 is part of the active site. C123 and C126 are joined by a disulfide. The active site involves H156. A disulfide bridge connects residues C195 and C231.

It belongs to the DNase I family. Ca(2+) is required as a cofactor. Requires Mg(2+) as cofactor. The only differences between the A and B forms and the C and D forms are in the compositions of the carbohydrate bound to Asn-40.

It is found in the secreted. The protein resides in the zymogen granule. It localises to the nucleus envelope. It catalyses the reaction Endonucleolytic cleavage to 5'-phosphodinucleotide and 5'-phosphooligonucleotide end-products.. Serum endocuclease secreted into body fluids by a wide variety of exocrine and endocrine organs. Expressed by non-hematopoietic tissues and preferentially cleaves protein-free DNA. Among other functions, seems to be involved in cell death by apoptosis. Binds specifically to G-actin and blocks actin polymerization. Together with DNASE1L3, plays a key role in degrading neutrophil extracellular traps (NETs). NETs are mainly composed of DNA fibers and are released by neutrophils to bind pathogens during inflammation. Degradation of intravascular NETs by DNASE1 and DNASE1L3 is required to prevent formation of clots that obstruct blood vessels and cause organ damage following inflammation. This Bos taurus (Bovine) protein is Deoxyribonuclease-1 (DNASE1).